The following is a 101-amino-acid chain: Small ribosomal subunit protein uS14 (101 aa).

The protein belongs to the universal ribosomal protein uS14 family. In terms of assembly, part of the 30S ribosomal subunit. Contacts proteins S3 and S10.

Functionally, binds 16S rRNA, required for the assembly of 30S particles and may also be responsible for determining the conformation of the 16S rRNA at the A site. This Aliivibrio fischeri (strain MJ11) (Vibrio fischeri) protein is Small ribosomal subunit protein uS14.